A 290-amino-acid chain; its full sequence is Shikimate dehydrogenase (NADP(+)) (290 aa).

Residues 18–20 (SYS) and threonine 66 contribute to the shikimate site. The Proton acceptor role is filled by lysine 70. Residue glutamate 82 coordinates NADP(+). Shikimate contacts are provided by asparagine 91 and aspartate 106. Residues 130-134 (GSGGA) and methionine 229 contribute to the NADP(+) site. Residue tyrosine 231 participates in shikimate binding. Position 252 (glycine 252) interacts with NADP(+).

This sequence belongs to the shikimate dehydrogenase family. Homodimer.

The catalysed reaction is shikimate + NADP(+) = 3-dehydroshikimate + NADPH + H(+). It participates in metabolic intermediate biosynthesis; chorismate biosynthesis; chorismate from D-erythrose 4-phosphate and phosphoenolpyruvate: step 4/7. Functionally, involved in the biosynthesis of the chorismate, which leads to the biosynthesis of aromatic amino acids. Catalyzes the reversible NADPH linked reduction of 3-dehydroshikimate (DHSA) to yield shikimate (SA). The sequence is that of Shikimate dehydrogenase (NADP(+)) from Chlorobium phaeovibrioides (strain DSM 265 / 1930) (Prosthecochloris vibrioformis (strain DSM 265)).